Here is a 596-residue protein sequence, read N- to C-terminus: Aspartate--tRNA(Asp/Asn) ligase (596 aa).

Position 172 (Glu172) interacts with L-aspartate. Positions 196 to 199 (QLFK) are aspartate. Arg218 contributes to the L-aspartate binding site. Residues 218-220 (RDE) and Gln227 each bind ATP. His450 is an L-aspartate binding site. Residue Glu484 coordinates ATP. An L-aspartate-binding site is contributed by Arg491. Position 536 to 539 (536 to 539 (GLDR)) interacts with ATP.

Belongs to the class-II aminoacyl-tRNA synthetase family. Type 1 subfamily. Homodimer.

The protein localises to the cytoplasm. It catalyses the reaction tRNA(Asx) + L-aspartate + ATP = L-aspartyl-tRNA(Asx) + AMP + diphosphate. Aspartyl-tRNA synthetase with relaxed tRNA specificity since it is able to aspartylate not only its cognate tRNA(Asp) but also tRNA(Asn). Reaction proceeds in two steps: L-aspartate is first activated by ATP to form Asp-AMP and then transferred to the acceptor end of tRNA(Asp/Asn). This is Aspartate--tRNA(Asp/Asn) ligase from Acidithiobacillus ferrooxidans (strain ATCC 23270 / DSM 14882 / CIP 104768 / NCIMB 8455) (Ferrobacillus ferrooxidans (strain ATCC 23270)).